Here is a 403-residue protein sequence, read N- to C-terminus: MSLQAIQFQRGDKSQVSVRVLDQLLLPYVSRYIPIQTVDDGFAVIRSMQVRGAPAIAIVGVLSVLVECQLLCNEDFVAVQAFYDLSSYAAFGRTMRMRLAHLLGSRPTAVNLSHALRDVERLLDSATSLSQFRDRMYDYACELLDMDVANNVRMGDNGARFLLDALIAEGFDGSFAVLTICNTGSLATAGYGTALGAIRSLWQHAEAGLTAPKKQKASACAPRMTHVFPLETRPYNQGSRLTAYELLHDAIPATLITDSSVAYRIQTSPVPIKAAFVGADRIARNGDTANKIGTLQLALVCRHFGIRFFVVAPRSTVDGTTAAGTDIPVEERCPDEFRVVTGAAAGATGDPTTASVAIAPRDMPVWNPAFDVTPHAYIDAIVTETRVFTKDAAGNFDLDELFT.

The active-site Proton donor is D280.

This sequence belongs to the eIF-2B alpha/beta/delta subunits family. MtnA subfamily.

Its subcellular location is the cytoplasm. The protein localises to the nucleus. The enzyme catalyses 5-(methylsulfanyl)-alpha-D-ribose 1-phosphate = 5-(methylsulfanyl)-D-ribulose 1-phosphate. Its pathway is amino-acid biosynthesis; L-methionine biosynthesis via salvage pathway; L-methionine from S-methyl-5-thio-alpha-D-ribose 1-phosphate: step 1/6. Functionally, catalyzes the interconversion of methylthioribose-1-phosphate (MTR-1-P) into methylthioribulose-1-phosphate (MTRu-1-P). In Eremothecium gossypii (strain ATCC 10895 / CBS 109.51 / FGSC 9923 / NRRL Y-1056) (Yeast), this protein is Methylthioribose-1-phosphate isomerase.